The following is a 589-amino-acid chain: Arylsulfatase L (589 aa).

Residues 1–31 (MLHLHHSCLCFRSWLPAMLAVLLSLAPSASS) form the signal peptide. The Ca(2+) site is built by Asp46 and Asp47. Asn58 carries N-linked (GlcNAc...) asparagine glycosylation. Cys86 is a binding site for Ca(2+). Cys86 serves as the catalytic Nucleophile. Residue Cys86 is modified to 3-oxoalanine (Cys). Asn125 carries an N-linked (GlcNAc...) asparagine glycan. Lys145 serves as a coordination point for substrate. Residue His147 is part of the active site. A glycan (N-linked (GlcNAc...) asparagine) is linked at Asn258. His301 contributes to the substrate binding site. N-linked (GlcNAc...) asparagine glycosylation occurs at Asn344. 2 residues coordinate Ca(2+): Asp353 and His354. Lys378 serves as a coordination point for substrate.

The protein belongs to the sulfatase family. Requires Ca(2+) as cofactor. In terms of processing, N-glycosylated. Post-translationally, the conversion to 3-oxoalanine (also known as C-formylglycine, FGly), of a serine or cysteine residue in prokaryotes and of a cysteine residue in eukaryotes, is critical for catalytic activity. Expressed in the pancreas, liver and kidney.

The protein localises to the golgi apparatus. It is found in the golgi stack. It catalyses the reaction an aryl sulfate + H2O = a phenol + sulfate + H(+). Its activity is regulated as follows. Inhibited by millimolar concentrations of warfarin. Functionally, exhibits arylsulfatase activity towards the artificial substrate 4-methylumbelliferyl sulfate. May be essential for the correct composition of cartilage and bone matrix during development. Has no activity toward steroid sulfates. The protein is Arylsulfatase L of Homo sapiens (Human).